Consider the following 289-residue polypeptide: ATP synthase gamma chain (289 aa).

Belongs to the ATPase gamma chain family. F-type ATPases have 2 components, CF(1) - the catalytic core - and CF(0) - the membrane proton channel. CF(1) has five subunits: alpha(3), beta(3), gamma(1), delta(1), epsilon(1). CF(0) has three main subunits: a, b and c.

The protein resides in the cell inner membrane. Functionally, produces ATP from ADP in the presence of a proton gradient across the membrane. The gamma chain is believed to be important in regulating ATPase activity and the flow of protons through the CF(0) complex. This chain is ATP synthase gamma chain, found in Nitrosococcus oceani (strain ATCC 19707 / BCRC 17464 / JCM 30415 / NCIMB 11848 / C-107).